A 293-amino-acid chain; its full sequence is Glycine N-methyltransferase (293 aa).

Residue valine 2 is modified to N-acetylvaline. Residues serine 4 and tyrosine 6 each contribute to the (6S)-5-methyl-5,6,7,8-tetrahydrofolate site. A Phosphoserine modification is found at serine 10. S-adenosyl-L-methionine is bound by residues tyrosine 22, tryptophan 31, tyrosine 34, and arginine 41. Tyrosine 34 is modified (phosphotyrosine). N6-succinyllysine is present on lysine 46. S-adenosyl-L-methionine-binding positions include alanine 65, 86–88 (DAS), 117–118 (NW), leucine 137, 137–140 (LGNS), and arginine 176. Residues lysine 191, lysine 196, and lysine 201 each carry the N6-succinyllysine modification. Histidine 215 serves as a coordination point for (6S)-5-methyl-5,6,7,8-tetrahydrofolate. An S-adenosyl-L-methionine-binding site is contributed by tyrosine 221. Residue arginine 240 coordinates (6S)-5-methyl-5,6,7,8-tetrahydrofolate.

The protein belongs to the class I-like SAM-binding methyltransferase superfamily. Glycine N-methyltransferase family. Homotetramer.

The protein resides in the cytoplasm. The enzyme catalyses glycine + S-adenosyl-L-methionine = sarcosine + S-adenosyl-L-homocysteine + H(+). Inhibited by 5-methyltetrahydrofolate monoglutamate and by 5-methyltetrahydrofolate pentaglutamate, inhibition is much more effective by the pentaglutamate form than by the monoglutamate form. Two molecules of 5-methyltetrahydrofolate are bound per tetramer. The binding sites are localized between subunits. Inhibitor binding may preclude movements of the polypeptide chain that are necessary for enzyme activity. Catalyzes the methylation of glycine by using S-adenosylmethionine (AdoMet) to form N-methylglycine (sarcosine) with the concomitant production of S-adenosylhomocysteine (AdoHcy), a reaction regulated by the binding of 5-methyltetrahydrofolate. Plays an important role in the regulation of methyl group metabolism by regulating the ratio between S-adenosyl-L-methionine and S-adenosyl-L-homocysteine. This is Glycine N-methyltransferase (Gnmt) from Mus musculus (Mouse).